The chain runs to 171 residues: Phosphopantetheine adenylyltransferase (171 aa).

A substrate-binding site is contributed by threonine 9. ATP contacts are provided by residues 9–10 and histidine 17; that span reads TF. Residues lysine 41, leucine 78, and arginine 92 each contribute to the substrate site. ATP contacts are provided by residues 93–95, glutamate 103, and 128–134; these read GLR and HQAIASK.

Belongs to the bacterial CoaD family. Homohexamer. Requires Mg(2+) as cofactor.

The protein resides in the cytoplasm. It catalyses the reaction (R)-4'-phosphopantetheine + ATP + H(+) = 3'-dephospho-CoA + diphosphate. The protein operates within cofactor biosynthesis; coenzyme A biosynthesis; CoA from (R)-pantothenate: step 4/5. In terms of biological role, reversibly transfers an adenylyl group from ATP to 4'-phosphopantetheine, yielding dephospho-CoA (dPCoA) and pyrophosphate. This Dinoroseobacter shibae (strain DSM 16493 / NCIMB 14021 / DFL 12) protein is Phosphopantetheine adenylyltransferase.